The sequence spans 161 residues: Large ribosomal subunit protein uL15 (161 aa).

The segment at 1-43 (MKLSEISDNPGARKKRMRIGRGIGSGKGKTGGRGGKGQTARSG) is disordered. Over residues 21-37 (RGIGSGKGKTGGRGGKG) the composition is skewed to gly residues.

This sequence belongs to the universal ribosomal protein uL15 family. Part of the 50S ribosomal subunit.

Binds to the 23S rRNA. The protein is Large ribosomal subunit protein uL15 of Rhodopseudomonas palustris (strain HaA2).